A 252-amino-acid polypeptide reads, in one-letter code: Large ribosomal subunit protein uL4 (252 aa).

It belongs to the universal ribosomal protein uL4 family. As to quaternary structure, part of the 50S ribosomal subunit.

Its function is as follows. One of the primary rRNA binding proteins, this protein initially binds near the 5'-end of the 23S rRNA. It is important during the early stages of 50S assembly. It makes multiple contacts with different domains of the 23S rRNA in the assembled 50S subunit and ribosome. Functionally, forms part of the polypeptide exit tunnel. This chain is Large ribosomal subunit protein uL4, found in Methanococcus vannielii (strain ATCC 35089 / DSM 1224 / JCM 13029 / OCM 148 / SB).